The sequence spans 386 residues: Na(+)/H(+) antiporter NhaA (386 aa).

11 consecutive transmembrane segments (helical) span residues 11-31, 60-80, 96-116, 126-146, 155-175, 180-200, 218-238, 260-280, 293-313, 326-346, and 358-378; these read NDATGGVVLIVAAAFAMFLAN, LLLWINDALMALFFLMIGLEV, MFPLIAALGGMLAPGLIYAAF, GWAIPTATDIAFALGILALLG, MFLMALAVIDDLGAIVIIALF, LSLISLTVAAASIAVLAVLNG, VAVLKSGVHATLAGVIVGLFI, VSWLILPLFAFANAGISLSGV, ITLGLFIGKPLGITLICWLAV, LIDIAAVGVLCGIGFTMSIFI, and LVTLAKLGILSGSVISALVGY.

This sequence belongs to the NhaA Na(+)/H(+) (TC 2.A.33) antiporter family.

It is found in the cell inner membrane. It carries out the reaction Na(+)(in) + 2 H(+)(out) = Na(+)(out) + 2 H(+)(in). Its function is as follows. Na(+)/H(+) antiporter that extrudes sodium in exchange for external protons. The sequence is that of Na(+)/H(+) antiporter NhaA from Erwinia tasmaniensis (strain DSM 17950 / CFBP 7177 / CIP 109463 / NCPPB 4357 / Et1/99).